The primary structure comprises 1154 residues: MAKTIDFLASDGEDNFAARTISATSKPNRNDATASSSKPQKRARRSTKGSDDDGNDDFDIASSLLASAAEPAAVGMLSSSQQASQKAYASRVSAKDDDDDDARFIASVMQHANIKAGLEVAKKALSGKNKGKNKLGSGVVTGGGSFQSMGLHPSLLRSLLIRGFTTPTPIQRQAIPAIMSQPPRDVVGMARTGSGKTLAYLIPLINRLNGRHSPTFGIKSLILCPSRELAVQILRVGKEIARGWKADAGEGQDSRGEAIRWAIIVGGESLDEQFGIMSNNPDVVIATPGRMLHLTVEMNLDLKSVEYVVFDEADRLFEMGFAEQLEEMLLRLPPTRQTLLFSATLPKKLVEFTKAGLQANPKLVRLDADSKISADLRMAFFSVKPSEKEAALLVLLRDVIGVPLGEQAARDLDEEAQFNEDASDNQADGQRSRGYGNRRAEFKGKTKDKHLGNKRKRGGPGGALELLPHQTIIFCATKHHVEYLLLLLTTTGYACSHIYSSLDQATRGIQMSRFRRGQNSLLIVTDVAARGIDLPVLEHVVNFDFPPQPRTFVHRVGRTARAGRNGWAWSMCTNAELPYLCDLQLFLARPLVSSHTAIAALANGRDVASADALGLHDSLILGTLPREALDLETEFISSSLTNTSSSTAHDFPALRAVADRAQQKYEKSIAKASQESHRRAKEMVKLGSIEQINIRTASGREGQVPEWTLAGSPLEEMAVHDVVKRPEVYGLNRANKADAVTSALGSDRMDDKVKRGTDNALKEADEAAKRAALLAKVNAFRPQETVFEIGIRGDATPLGALMRSRRQTMQVKTKRAEALEARKRAIEGGGDAMEDDEEVTKPKVAARNKGKKKATAGKADNDEAVVGDAMVDMEQADEADILAAFDTTKPSKAQVQREALTDSETDASESDRDAASARHTKRARTKKAAPTSYRDPNFYLSYEQQGSTSERGYSLNNARSHTDSFIQQASAVSFDLAGDDATLGTQSQRPNVTRWDSKKKNFIQATVGADNKKMIRTESGVRLPASFRSGRYEDWKREKRIDMPKTGEIESNNHRVHERSPPETSVMGLKRFRHTKLSAPKTAGVFGNRRPGQPKRQAAKDEVKSARQIQKDRELKEKRREKNARPSKSDTNRRAKRGAARRGRGGHGPRGASR.

The interval 16 to 58 is disordered; that stretch reads FAARTISATSKPNRNDATASSSKPQKRARRSTKGSDDDGNDDF. The segment covering 21-38 has biased composition (polar residues); it reads ISATSKPNRNDATASSSK. The Q motif motif lies at 144–172; the sequence is GSFQSMGLHPSLLRSLLIRGFTTPTPIQR. Residues 177–363 enclose the Helicase ATP-binding domain; it reads AIMSQPPRDV…KAGLQANPKL (187 aa). Residue 190–197 coordinates ATP; it reads ARTGSGKT. Residues 311 to 314 carry the DEAD box motif; sequence DEAD. Disordered stretches follow at residues 417–462, 826–859, 885–939, and 1043–1154; these read QFNE…GPGG, IEGGGDAMEDDEEVTKPKVAARNKGKKKATAGKA, FDTT…PNFY, and MPKT…GASR. Over residues 438–451 the composition is skewed to basic and acidic residues; the sequence is RRAEFKGKTKDKHL. The Helicase C-terminal domain maps to 446–602; that stretch reads TKDKHLGNKR…SSHTAIAALA (157 aa). Basic residues-rich tracts occupy residues 844–855 and 918–927; these read VAARNKGKKKAT and RHTKRARTKK. 2 stretches are compositionally biased toward basic and acidic residues: residues 1043–1061 and 1098–1133; these read MPKTGEIESNNHRVHERSP and AAKDEVKSARQIQKDRELKEKRREKNARPSKSDTNR. Positions 1134–1154 are enriched in basic residues; sequence RAKRGAARRGRGGHGPRGASR.

Belongs to the DEAD box helicase family. DDX54/DBP10 subfamily.

Its subcellular location is the nucleus. The protein resides in the nucleolus. It carries out the reaction ATP + H2O = ADP + phosphate + H(+). In terms of biological role, ATP-binding RNA helicase involved in the biogenesis of 60S ribosomal subunits and is required for the normal formation of 25S and 5.8S rRNAs. The chain is ATP-dependent RNA helicase DBP10 (DBP10) from Mycosarcoma maydis (Corn smut fungus).